The following is a 693-amino-acid chain: Methionine--tRNA ligase (693 aa).

A 'HIGH' region motif is present at residues 12-22; sequence PYANGPLHLGH. Cysteine 143, cysteine 146, cysteine 156, and cysteine 159 together coordinate Zn(2+). The 'KMSKS' region signature appears at 330-334; that stretch reads KMSKS. Lysine 333 is an ATP binding site. Positions 557-576 are disordered; that stretch reads APTAKNEAAKPAAPAAAKTE. Residues 590-693 form the tRNA-binding domain; the sequence is DFAKLDLRIG…SGAQPGMPVR (104 aa).

Belongs to the class-I aminoacyl-tRNA synthetase family. MetG type 1 subfamily. As to quaternary structure, homodimer. Zn(2+) serves as cofactor.

It is found in the cytoplasm. The catalysed reaction is tRNA(Met) + L-methionine + ATP = L-methionyl-tRNA(Met) + AMP + diphosphate. Functionally, is required not only for elongation of protein synthesis but also for the initiation of all mRNA translation through initiator tRNA(fMet) aminoacylation. The polypeptide is Methionine--tRNA ligase (Stenotrophomonas maltophilia (strain R551-3)).